We begin with the raw amino-acid sequence, 154 residues long: Ribonuclease HI (154 aa).

An RNase H type-1 domain is found at 1–142 (MTKHVEIFTD…CDELARTAAE (142 aa)). Mg(2+) is bound by residues Asp10, Glu48, Asp70, and Asp134.

The protein belongs to the RNase H family. As to quaternary structure, monomer. Requires Mg(2+) as cofactor.

Its subcellular location is the cytoplasm. The enzyme catalyses Endonucleolytic cleavage to 5'-phosphomonoester.. Its function is as follows. Endonuclease that specifically degrades the RNA of RNA-DNA hybrids. In Vibrio parahaemolyticus serotype O3:K6 (strain RIMD 2210633), this protein is Ribonuclease HI.